The primary structure comprises 171 residues: Glutathione peroxidase-like peroxiredoxin GPX3 (171 aa).

Cys43 serves as the catalytic Cysteine sulfenic acid (-SOH) intermediate. The cysteines at positions 43 and 89 are disulfide-linked.

Belongs to the glutathione peroxidase family. In terms of assembly, interacts with CAP1 and probably YBP1.

The enzyme catalyses a hydroperoxide + [thioredoxin]-dithiol = an alcohol + [thioredoxin]-disulfide + H2O. Functionally, involved in oxidative stress response and redox homeostasis. Functions as a sensor and transducer of hydroperoxide stress. In response to hydroperoxide stress it oxidizes (activates) the transcription activator CAP1, which is involved in transcription activation of genes of the oxidative stress response pathway. May also play a direct role in hydroperoxide scavenging. The enzyme is not required for the glutaredoxin-mediated antioxidant function. In the presence of peroxides, GPX3 is directly oxidized at Cys-43 to form a cysteine sulfenic acid (-SOH). Cys-43-SOH then forms either an intramolecular disulfide bond (Cys-43 with Cys-89) or a transient, intermolecular disulfide bond with 'Cys-446' of CAP1, which is further resolved into a CAP1 intramolecular disulfide bond ('Cys-303' with 'Cys-598'), which causes its nuclear accumulation and activation, and a reduced Cys-43 in GPX3. Required for C.albicans-mediated macrophage killing. The chain is Glutathione peroxidase-like peroxiredoxin GPX3 from Candida albicans (strain SC5314 / ATCC MYA-2876) (Yeast).